The following is a 1409-amino-acid chain: Adhesion and penetration protein autotransporter (1409 aa).

An N-terminal signal peptide occupies residues Met-1–Ala-25. The Peptidase S6 domain occupies Gly-26–Glu-294. The active site involves Ser-250. Disordered regions lie at residues Tyr-866–Ser-888 and Ala-1016–Ala-1078. A compositionally biased stretch (polar residues) spans Val-1057–Lys-1067. Residues Pro-1068–Arg-1077 are compositionally biased toward basic residues. One can recognise an Autotransporter domain in the interval Val-1156–Trp-1409.

It is found in the periplasm. Its subcellular location is the secreted. The protein localises to the cell surface. The protein resides in the cell outer membrane. Its function is as follows. Probable protease; promotes adherence and invasion by directly binding to a host cell structure. The sequence is that of Adhesion and penetration protein autotransporter (hap) from Haemophilus influenzae (strain ATCC 51907 / DSM 11121 / KW20 / Rd).